The chain runs to 214 residues: Cytochrome b (214 aa).

A run of 4 helical transmembrane segments spans residues 31–51 (FGSM…FLAI), 75–96 (WIMQ…YIHI), 111–131 (WLSG…GYVL), and 176–196 (FFAL…IHIL). Residues His-81 and His-95 each coordinate heme b. Residues His-180 and His-194 each coordinate heme b. Residue His-199 coordinates a ubiquinone.

It belongs to the cytochrome b family. As to quaternary structure, the cytochrome bc1 complex contains 3 respiratory subunits (MT-CYB, CYC1 and UQCRFS1), 2 core proteins (UQCRC1 and UQCRC2) and probably 6 low-molecular weight proteins. Heme b is required as a cofactor.

It is found in the mitochondrion inner membrane. Component of the ubiquinol-cytochrome c reductase complex (complex III or cytochrome b-c1 complex) that is part of the mitochondrial respiratory chain. The b-c1 complex mediates electron transfer from ubiquinol to cytochrome c. Contributes to the generation of a proton gradient across the mitochondrial membrane that is then used for ATP synthesis. The chain is Cytochrome b (MT-CYB) from Bothrops bilineatus (Green jararaca).